The following is a 111-amino-acid chain: Irditoxin subunit B (111 aa).

The first 19 residues, 1–19, serve as a signal peptide directing secretion; the sequence is MKTLLLAVAVVAFVCLGSA. A propeptide spanning residues 20-34 is cleaved from the precursor; that stretch reads DQLGLGRQQIDWGKG. Glutamine 35 bears the Pyrrolidone carboxylic acid mark. Intrachain disulfides connect cysteine 44-cysteine 68, cysteine 47-cysteine 55, cysteine 61-cysteine 87, cysteine 91-cysteine 102, and cysteine 103-cysteine 108.

The protein belongs to the three-finger toxin family. Ancestral subfamily. Boigatoxin sub-subfamily. In terms of assembly, heterodimer of A and B chains; disulfide-linked. As to expression, expressed by the venom gland.

The protein resides in the secreted. Its function is as follows. This bird and reptile-specific postsynaptic neurotoxin inhibits the chick muscle alpha-1-beta-1-gamma-delta (CHRNA1-CHRNB1-CHRNG-CHRND) nicotinic acetylcholine receptor (nAChR) 100-fold more compared with the mouse receptor. In vivo, produces rapid flaccid paralysis, dyspnea and increased respiratory rate in geckos. At sublethal doses geckos were immobilized for up to three days and then recovered. Chicks injected with lethal doses showed rapid onset of inactivity, dyspnea and neck droop, and no extended paralysis with survival was seen. The protein is Irditoxin subunit B of Boiga irregularis (Brown tree snake).